Consider the following 344-residue polypeptide: Fructose-1,6-bisphosphatase class 1 (344 aa).

Positions 92, 115, 117, and 118 each coordinate Mg(2+). Substrate contacts are provided by residues 118-121, N211, Y244, and K274; that span reads DGSS. E280 serves as a coordination point for Mg(2+).

The protein belongs to the FBPase class 1 family. Homotetramer. Requires Mg(2+) as cofactor.

Its subcellular location is the cytoplasm. It catalyses the reaction beta-D-fructose 1,6-bisphosphate + H2O = beta-D-fructose 6-phosphate + phosphate. It participates in carbohydrate biosynthesis; gluconeogenesis. The protein is Fructose-1,6-bisphosphatase class 1 of Aeromonas salmonicida (strain A449).